A 213-amino-acid polypeptide reads, in one-letter code: Ion-translocating oxidoreductase complex subunit A (213 aa).

The Periplasmic segment spans residues 1–24; the sequence is MLLLWQSRIMPGSEANIYITMTEY. Residues 25–45 form a helical membrane-spanning segment; that stretch reads LLLLIGTVLVNNFVLVKFLGL. Over 46-58 the chain is Cytoplasmic; sequence CPFMGVSKKLETA. Residues 59-79 traverse the membrane as a helical segment; the sequence is IGMGLATTFVLTLASVCAYLV. Topologically, residues 80-86 are periplasmic; sequence ESYVLRP. Residues 87 to 107 form a helical membrane-spanning segment; it reads LGIEYLRTMSFILVIAVVVQF. Topologically, residues 108 to 121 are cytoplasmic; that stretch reads TEMVVHKTSPTLYR. The helical transmembrane segment at 122–142 threads the bilayer; the sequence is LLGIFLPLITTNCAVLGVALL. Residues 143-153 are Periplasmic-facing; it reads NINENHNFIQS. The helical transmembrane segment at 154–174 threads the bilayer; sequence IIYGFGAAVGFSLVLILFASM. Residues 175–190 are Cytoplasmic-facing; the sequence is RERIHVADVPAPFKGA. Residues 191-211 traverse the membrane as a helical segment; that stretch reads SIAMITAGLMSLAFMGFTGLV. Residues 212-213 lie on the Periplasmic side of the membrane; it reads KL.

This sequence belongs to the NqrDE/RnfAE family. In terms of assembly, the complex is composed of six subunits: RnfA, RnfB, RnfC, RnfD, RnfE and RnfG.

The protein localises to the cell inner membrane. Part of a membrane-bound complex that couples electron transfer with translocation of ions across the membrane. The chain is Ion-translocating oxidoreductase complex subunit A from Vibrio cholerae serotype O1 (strain ATCC 39541 / Classical Ogawa 395 / O395).